Here is a 95-residue protein sequence, read N- to C-terminus: MSVDAQTVRRIAHLARIAVSDAEVPPLQDELNAILAFVEQLGAVDVSGVEPMTSVTPMAMKQRDDAVTDGGYAREIVFNAPLSEDNYFLVPKVVE.

This sequence belongs to the GatC family. In terms of assembly, heterotrimer of A, B and C subunits.

The enzyme catalyses L-glutamyl-tRNA(Gln) + L-glutamine + ATP + H2O = L-glutaminyl-tRNA(Gln) + L-glutamate + ADP + phosphate + H(+). The catalysed reaction is L-aspartyl-tRNA(Asn) + L-glutamine + ATP + H2O = L-asparaginyl-tRNA(Asn) + L-glutamate + ADP + phosphate + 2 H(+). Functionally, allows the formation of correctly charged Asn-tRNA(Asn) or Gln-tRNA(Gln) through the transamidation of misacylated Asp-tRNA(Asn) or Glu-tRNA(Gln) in organisms which lack either or both of asparaginyl-tRNA or glutaminyl-tRNA synthetases. The reaction takes place in the presence of glutamine and ATP through an activated phospho-Asp-tRNA(Asn) or phospho-Glu-tRNA(Gln). This is Aspartyl/glutamyl-tRNA(Asn/Gln) amidotransferase subunit C from Methylobacterium sp. (strain 4-46).